A 130-amino-acid polypeptide reads, in one-letter code: YopE regulator (130 aa).

Its function is as follows. Positive regulator of YopE. In Yersinia enterocolitica serotype O:8 / biotype 1B (strain NCTC 13174 / 8081), this protein is YopE regulator (yerA).